Reading from the N-terminus, the 477-residue chain is UDP-N-acetylmuramate--L-alanine ligase (477 aa).

125 to 131 contacts ATP; that stretch reads GTHGKTT.

This sequence belongs to the MurCDEF family.

It is found in the cytoplasm. It catalyses the reaction UDP-N-acetyl-alpha-D-muramate + L-alanine + ATP = UDP-N-acetyl-alpha-D-muramoyl-L-alanine + ADP + phosphate + H(+). It participates in cell wall biogenesis; peptidoglycan biosynthesis. In terms of biological role, cell wall formation. The polypeptide is UDP-N-acetylmuramate--L-alanine ligase (Acidothermus cellulolyticus (strain ATCC 43068 / DSM 8971 / 11B)).